The primary structure comprises 280 residues: 3,2-trans-enoyl-CoA isomerase (280 aa).

Substrate is bound by residues Ser68–Phe72 and Leu126. Catalysis depends on Glu158, which acts as the Proton donor/acceptor. The Microbody targeting signal signature appears at His278–Leu280.

The protein belongs to the enoyl-CoA hydratase/isomerase family. Homohexamer, dimer of trimers. Interacts with DCI1.

The protein localises to the peroxisome. It catalyses the reaction a (3Z)-enoyl-CoA = a 4-saturated (2E)-enoyl-CoA. The catalysed reaction is a (3E)-enoyl-CoA = a 4-saturated (2E)-enoyl-CoA. It participates in lipid metabolism; fatty acid beta-oxidation. Essential for the beta oxidation of unsaturated fatty acids. The chain is 3,2-trans-enoyl-CoA isomerase (ECI1) from Saccharomyces cerevisiae (strain ATCC 204508 / S288c) (Baker's yeast).